A 59-amino-acid chain; its full sequence is Small, acid-soluble spore protein H (59 aa).

Belongs to the SspH family.

It localises to the spore core. In Bacillus licheniformis (strain ATCC 14580 / DSM 13 / JCM 2505 / CCUG 7422 / NBRC 12200 / NCIMB 9375 / NCTC 10341 / NRRL NRS-1264 / Gibson 46), this protein is Small, acid-soluble spore protein H.